The chain runs to 257 residues: UPF0259 membrane protein WIGBR3650 (257 aa).

Transmembrane regions (helical) follow at residues 23-43 (IIFFSTISAIISSLINYIFLP), 89-109 (LSSLVGNAFLFSNIITMINTI), 122-142 (IILSSSLIPKFLTLIFLISFL), 148-168 (ALMLIPGIIVLIFLSFSPILI), 190-210 (IKTVAPIIFLWLLIKLIILVI), and 223-243 (VKIFFYLINNIITVYIIIYMY).

Belongs to the UPF0259 family.

The protein localises to the cell membrane. This chain is UPF0259 membrane protein WIGBR3650, found in Wigglesworthia glossinidia brevipalpis.